The sequence spans 361 residues: Queuine tRNA-ribosyltransferase (361 aa).

Residue D92 is the Proton acceptor of the active site. Residues 92-96 (DSGGF), D146, Q189, and G216 contribute to the substrate site. An RNA binding region spans residues 247–253 (GVGKPAD). Residue D266 is the Nucleophile of the active site. The RNA binding; important for wobble base 34 recognition stretch occupies residues 271 to 275 (TRSGR). Residues C304, C306, C309, and H335 each contribute to the Zn(2+) site.

The protein belongs to the queuine tRNA-ribosyltransferase family. Homodimer. Within each dimer, one monomer is responsible for RNA recognition and catalysis, while the other monomer binds to the replacement base PreQ1. It depends on Zn(2+) as a cofactor.

The enzyme catalyses 7-aminomethyl-7-carbaguanine + guanosine(34) in tRNA = 7-aminomethyl-7-carbaguanosine(34) in tRNA + guanine. It functions in the pathway tRNA modification; tRNA-queuosine biosynthesis. In terms of biological role, catalyzes the base-exchange of a guanine (G) residue with the queuine precursor 7-aminomethyl-7-deazaguanine (PreQ1) at position 34 (anticodon wobble position) in tRNAs with GU(N) anticodons (tRNA-Asp, -Asn, -His and -Tyr). Catalysis occurs through a double-displacement mechanism. The nucleophile active site attacks the C1' of nucleotide 34 to detach the guanine base from the RNA, forming a covalent enzyme-RNA intermediate. The proton acceptor active site deprotonates the incoming PreQ1, allowing a nucleophilic attack on the C1' of the ribose to form the product. After dissociation, two additional enzymatic reactions on the tRNA convert PreQ1 to queuine (Q), resulting in the hypermodified nucleoside queuosine (7-(((4,5-cis-dihydroxy-2-cyclopenten-1-yl)amino)methyl)-7-deazaguanosine). This chain is Queuine tRNA-ribosyltransferase, found in Rickettsia typhi (strain ATCC VR-144 / Wilmington).